The chain runs to 217 residues: Octanoyltransferase (217 aa).

Positions 30–209 (GNRPPTLLLL…AFAEVFGLRP (180 aa)) constitute a BPL/LPL catalytic domain. Substrate contacts are provided by residues 75–82 (RGGDVTYH), 139–141 (AIG), and 152–154 (GFA). The active-site Acyl-thioester intermediate is the C170.

The protein belongs to the LipB family.

It localises to the cytoplasm. The enzyme catalyses octanoyl-[ACP] + L-lysyl-[protein] = N(6)-octanoyl-L-lysyl-[protein] + holo-[ACP] + H(+). The protein operates within protein modification; protein lipoylation via endogenous pathway; protein N(6)-(lipoyl)lysine from octanoyl-[acyl-carrier-protein]: step 1/2. Catalyzes the transfer of endogenously produced octanoic acid from octanoyl-acyl-carrier-protein onto the lipoyl domains of lipoate-dependent enzymes. Lipoyl-ACP can also act as a substrate although octanoyl-ACP is likely to be the physiological substrate. This is Octanoyltransferase from Thermus thermophilus (strain ATCC 27634 / DSM 579 / HB8).